Reading from the N-terminus, the 395-residue chain is Leukosialin (395 aa).

The signal sequence occupies residues 1–19 (MALHLLLLFGACWVQVASP). Residues 20–248 (DSLQRTTMLP…TRSPSQESSG (229 aa)) are Extracellular-facing. Over residues 27–56 (MLPSTPHITAPSTSEAQNASPSVSVGSGTV) the composition is skewed to polar residues. The tract at residues 27–245 (MLPSTPHITA…PITTRSPSQE (219 aa)) is disordered. The span at 73-88 (SLTPLETTELSSLETS) shows a compositional bias: low complexity. Polar residues-rich tracts occupy residues 89-111 (AGASMSTPVPEPTASQEVSSKTS) and 145-154 (TAASTSISKG). Low complexity predominate over residues 155–166 (TSAPPTTVTTSS). Asn167 carries N-linked (GlcNAc...) asparagine glycosylation. A compositionally biased stretch (polar residues) spans 167–196 (NETSGPSVATTVSSKTSGPPVTTATGSLGP). Residues 205 to 241 (ATTATSSVESSSVARGTSVSSRKTSTTSTQDPITTRS) are compositionally biased toward low complexity. Residues 249–271 (MLLVPMLIALVVVLALVALLLLW) form a helical membrane-spanning segment. The interval 272–302 (RQRQKRRTGALTLSGGGKRNGVVDAWAGPAR) is required for interaction with EZR, MSN and RDX and for co-localization to microvilli. Residues 272–395 (RQRQKRRTGA…AKDEAAPQSL (124 aa)) lie on the Cytoplasmic side of the membrane. The Nuclear localization signal signature appears at 276–290 (KRRTGALTLSGGGKR). Ser285 and Ser328 each carry phosphoserine. The segment at 303-395 (VPDEEATTTS…AKDEAAPQSL (93 aa)) is disordered. Over residues 327 to 338 (GSGQRPTLTTFF) the composition is skewed to polar residues. Thr333 is subject to Phosphothreonine. Ser339 and Ser343 each carry phosphoserine. Ser347 is subject to Phosphoserine; by PKC/PRKCQ. Ser371 bears the Phosphoserine mark. The residue at position 378 (Thr378) is a Phosphothreonine. Basic and acidic residues predominate over residues 385 to 395 (QAKDEAAPQSL).

As to quaternary structure, interacts with SIGLEC1. Interacts with isoform 2 of HIPK2. Interacts with CTNNB1. Interacts with RDX (via FERM domain). Interacts with EZR. Interacts with MSN. Phosphorylation at Ser-347 is regulated by chemokines, requires its association with ERM proteins (EZR, RDX and MSN) and is essential for its function in the regulation of T-cell trafficking to lymph nodes. In terms of processing, has a high content of sialic acid and O-linked carbohydrate structures. Post-translationally, cleavage by CTSG releases its extracellular domain and triggers its intramembrane proteolysis by gamma-secretase releasing the CD43 cytoplasmic tail chain (CD43-ct) which translocates to the nucleus. Sumoylated. In terms of tissue distribution, cell surface of thymocytes, T-lymphocytes, neutrophils, plasma cells and myelomas.

Its subcellular location is the membrane. It is found in the cell projection. The protein resides in the microvillus. It localises to the uropodium. The protein localises to the nucleus. Its subcellular location is the PML body. Functionally, predominant cell surface sialoprotein of leukocytes which regulates multiple T-cell functions, including T-cell activation, proliferation, differentiation, trafficking and migration. Positively regulates T-cell trafficking to lymph-nodes via its association with ERM proteins (EZR, RDX and MSN). Negatively regulates Th2 cell differentiation and predisposes the differentiation of T-cells towards a Th1 lineage commitment. Promotes the expression of IFN-gamma by T-cells during T-cell receptor (TCR) activation of naive cells and induces the expression of IFN-gamma by CD4(+) T-cells and to a lesser extent by CD8(+) T-cells. Plays a role in preparing T-cells for cytokine sensing and differentiation into effector cells by inducing the expression of cytokine receptors IFNGR and IL4R, promoting IFNGR and IL4R signaling and by mediating the clustering of IFNGR with TCR. Acts as a major E-selectin ligand responsible for Th17 cell rolling on activated vasculature and recruitment during inflammation. Mediates Th17 cells, but not Th1 cells, adhesion to E-selectin. Acts as a T-cell counter-receptor for SIGLEC1. Protects cells from apoptotic signals, promoting cell survival. In Mus musculus (Mouse), this protein is Leukosialin (Spn).